A 99-amino-acid chain; its full sequence is NADH-quinone oxidoreductase subunit K (99 aa).

Helical transmembrane passes span 3 to 23, 28 to 48, and 59 to 79; these read VTAY…GVLI, IVVF…LVAF, and IAAF…LAII.

The protein belongs to the complex I subunit 4L family. In terms of assembly, NDH-1 is composed of 14 different subunits. Subunits NuoA, H, J, K, L, M, N constitute the membrane sector of the complex.

Its subcellular location is the cell membrane. The catalysed reaction is a quinone + NADH + 5 H(+)(in) = a quinol + NAD(+) + 4 H(+)(out). NDH-1 shuttles electrons from NADH, via FMN and iron-sulfur (Fe-S) centers, to quinones in the respiratory chain. The immediate electron acceptor for the enzyme in this species is believed to be a menaquinone. Couples the redox reaction to proton translocation (for every two electrons transferred, four hydrogen ions are translocated across the cytoplasmic membrane), and thus conserves the redox energy in a proton gradient. This is NADH-quinone oxidoreductase subunit K from Nocardioides sp. (strain ATCC BAA-499 / JS614).